We begin with the raw amino-acid sequence, 354 residues long: Chorismate synthase (354 aa).

Position 46 (R46) interacts with NADP(+). Residues 123–125 (RVS), 233–234 (NG), G273, 288–292 (KPTPS), and R314 each bind FMN.

The protein belongs to the chorismate synthase family. As to quaternary structure, homotetramer. Requires FMNH2 as cofactor.

The catalysed reaction is 5-O-(1-carboxyvinyl)-3-phosphoshikimate = chorismate + phosphate. The protein operates within metabolic intermediate biosynthesis; chorismate biosynthesis; chorismate from D-erythrose 4-phosphate and phosphoenolpyruvate: step 7/7. Its function is as follows. Catalyzes the anti-1,4-elimination of the C-3 phosphate and the C-6 proR hydrogen from 5-enolpyruvylshikimate-3-phosphate (EPSP) to yield chorismate, which is the branch point compound that serves as the starting substrate for the three terminal pathways of aromatic amino acid biosynthesis. This reaction introduces a second double bond into the aromatic ring system. The sequence is that of Chorismate synthase from Campylobacter curvus (strain 525.92).